The chain runs to 221 residues: Small ribosomal subunit protein uS2c (221 aa).

The protein belongs to the universal ribosomal protein uS2 family.

The protein localises to the plastid. The protein resides in the chloroplast. This is Small ribosomal subunit protein uS2c (rps2) from Cyanidioschyzon merolae (strain NIES-3377 / 10D) (Unicellular red alga).